We begin with the raw amino-acid sequence, 827 residues long: Glycerol-3-phosphate acyltransferase (827 aa).

Residues 325-330 (CHRSHM) carry the HXXXXD motif motif.

Belongs to the GPAT/DAPAT family.

It localises to the cell inner membrane. It catalyses the reaction sn-glycerol 3-phosphate + an acyl-CoA = a 1-acyl-sn-glycero-3-phosphate + CoA. It participates in phospholipid metabolism; CDP-diacylglycerol biosynthesis; CDP-diacylglycerol from sn-glycerol 3-phosphate: step 1/3. The sequence is that of Glycerol-3-phosphate acyltransferase from Shigella dysenteriae serotype 1 (strain Sd197).